The primary structure comprises 301 residues: GTPase Era (301 aa).

The Era-type G domain occupies 6–173 (KSGFVAIVGR…LEQTNANLEI (168 aa)). The G1 stretch occupies residues 14 to 21 (GRPNVGKS). 14 to 21 (GRPNVGKS) lines the GTP pocket. The tract at residues 40–44 (QTTRN) is G2. Residues 61-64 (DTPG) are G3. GTP-binding positions include 61–65 (DTPGI) and 123–126 (NKID). The G4 stretch occupies residues 123-126 (NKID). The G5 stretch occupies residues 152 to 154 (ISA). The region spanning 204–282 (TREEVPHSVA…FLEIWVKVQK (79 aa)) is the KH type-2 domain.

The protein belongs to the TRAFAC class TrmE-Era-EngA-EngB-Septin-like GTPase superfamily. Era GTPase family. Monomer.

It localises to the cytoplasm. The protein localises to the cell membrane. An essential GTPase that binds both GDP and GTP, with rapid nucleotide exchange. Plays a role in 16S rRNA processing and 30S ribosomal subunit biogenesis and possibly also in cell cycle regulation and energy metabolism. The polypeptide is GTPase Era (Listeria welshimeri serovar 6b (strain ATCC 35897 / DSM 20650 / CCUG 15529 / CIP 8149 / NCTC 11857 / SLCC 5334 / V8)).